Consider the following 121-residue polypeptide: Small ribosomal subunit protein uS13 (121 aa).

The segment at 91-121 (HRRGLPVRGQNTKNNARTRKGPSKTVAGKKK) is disordered. Over residues 106–121 (ARTRKGPSKTVAGKKK) the composition is skewed to basic residues.

It belongs to the universal ribosomal protein uS13 family. Part of the 30S ribosomal subunit. Forms a loose heterodimer with protein S19. Forms two bridges to the 50S subunit in the 70S ribosome.

Located at the top of the head of the 30S subunit, it contacts several helices of the 16S rRNA. In the 70S ribosome it contacts the 23S rRNA (bridge B1a) and protein L5 of the 50S subunit (bridge B1b), connecting the 2 subunits; these bridges are implicated in subunit movement. Contacts the tRNAs in the A and P-sites. This Listeria monocytogenes serotype 4b (strain CLIP80459) protein is Small ribosomal subunit protein uS13.